The primary structure comprises 230 residues: Ubiquitin carboxyl-terminal hydrolase isozyme L3 (230 aa).

A UCH catalytic domain is found at 5–229; sequence RWLPLEANPE…LRFNAIALSA (225 aa). Residues 8–13 are interaction with ubiquitin; the sequence is PLEANP. Cys-95 (nucleophile) is an active-site residue. Ser-130 carries the post-translational modification Phosphoserine. Residues 152 to 159 form an interaction with ubiquitin. Crossover loop which restricts access of large ubiquitin adducts to the active site region; that stretch reads AHEGQTEA. Residue His-169 is the Proton donor of the active site. The segment at 219–224 is interaction with ubiquitin; it reads ELRFNA.

This sequence belongs to the peptidase C12 family. Preferentially binds diubiquitin; the interaction does not hydrolyze diubiquitin but, in vitro, inhibits the hydrolyzing activity on other substrates. As to expression, highly expressed in heart, skeletal muscle, and testis.

It localises to the cytoplasm. The enzyme catalyses Thiol-dependent hydrolysis of ester, thioester, amide, peptide and isopeptide bonds formed by the C-terminal Gly of ubiquitin (a 76-residue protein attached to proteins as an intracellular targeting signal).. Inhibited by monoubiquitin and diubiquitin. Deubiquitinating enzyme (DUB) that controls levels of cellular ubiquitin through processing of ubiquitin precursors and ubiquitinated proteins. Thiol protease that recognizes and hydrolyzes a peptide bond at the C-terminal glycine of either ubiquitin or NEDD8. Has a 10-fold preference for Arg and Lys at position P3'', and exhibits a preference towards 'Lys-48'-linked ubiquitin chains. Deubiquitinates ENAC in apical compartments, thereby regulating apical membrane recycling. Indirectly increases the phosphorylation of IGFIR, AKT and FOXO1 and promotes insulin-signaling and insulin-induced adipogenesis. Required for stress-response retinal, skeletal muscle and germ cell maintenance. May be involved in working memory. Can hydrolyze UBB(+1), a mutated form of ubiquitin which is not effectively degraded by the proteasome and is associated with neurogenerative disorders. The protein is Ubiquitin carboxyl-terminal hydrolase isozyme L3 (UCHL3) of Homo sapiens (Human).